An 833-amino-acid chain; its full sequence is 3-hydroxy-3-methylglutaryl-coenzyme A reductase (833 aa).

4 consecutive transmembrane segments (helical) span residues 10–32 (FCARHQWEVIVATLALLACAASV), 91–117 (YLLIIAGVFSTFASFIFTSAVASLFWS), 160–180 (LALLGPTATLDTLLAVLLVGV), and 301–321 (SADYIVIATLLCALIIKFVFF). Residues 322–419 (EEQRNWVIDM…EEVVMLVEQS (98 aa)) are linker. Residues 347–374 (KPKFSVGDDSNSEVSTQTEGVLEDEWPT) form a disordered region. The segment covering 354 to 365 (DDSNSEVSTQTE) has biased composition (polar residues). The catalytic stretch occupies residues 420–833 (HIPLHRLEAV…ENITLKVPTL (414 aa)). Active-site charge relay system residues include Glu-504 and Lys-635. An N-linked (GlcNAc...) asparagine glycan is attached at Asn-680. Catalysis depends on Asp-711, which acts as the Charge relay system. Residues Asn-715 and Asn-720 are each glycosylated (N-linked (GlcNAc...) asparagine). The active-site Proton donor is His-809. Asn-813 and Asn-825 each carry an N-linked (GlcNAc...) asparagine glycan.

This sequence belongs to the HMG-CoA reductase family.

It is found in the endoplasmic reticulum membrane. It carries out the reaction (R)-mevalonate + 2 NADP(+) + CoA = (3S)-3-hydroxy-3-methylglutaryl-CoA + 2 NADPH + 2 H(+). The protein operates within metabolic intermediate biosynthesis; (R)-mevalonate biosynthesis; (R)-mevalonate from acetyl-CoA: step 3/3. With respect to regulation, the activity of HMG-CoA-reductase is suppressed by exogenous mevalonate. Synthesis of mevalonate for the production of non-sterol isoprenoids, which are essential for growth differentiation. The protein is 3-hydroxy-3-methylglutaryl-coenzyme A reductase (HMGR) of Agrotis ipsilon (Black cutworm moth).